Here is a 507-residue protein sequence, read N- to C-terminus: UDP-N-acetylhexosamine pyrophosphorylase-like protein 1 (507 aa).

The tract at residues A56–R91 is disordered. A compositionally biased stretch (basic and acidic residues) spans R78–R91. The Substrate binding motif lies at L111 to G114. UTP is bound by residues L111 to G114, K125, Q199, and G225. N226 lines the substrate pocket. UTP is bound at residue D256. Positions E306–Y307 match the Substrate binding motif. UTP is bound at residue K380. A substrate-binding site is contributed by K410.

The protein belongs to the UDPGP type 1 family.

The chain is UDP-N-acetylhexosamine pyrophosphorylase-like protein 1 (UAP1L1) from Homo sapiens (Human).